The primary structure comprises 219 residues: Interleukin-6 (219 aa).

The N-terminal stretch at 1–20 (MNSSTRYLSLLSALVVLVKG) is a signal peptide. A disulfide bond links Cys103 and Cys111.

Belongs to the IL-6 superfamily. As to quaternary structure, component of a hexamer of two molecules each of IL6, IL6R and IL6ST; first binds to IL6R to associate with the signaling subunit IL6ST. Expressed in spleen, gill and gastrointestinal tract, ovary and brain. Highest expression in ovary.

Its subcellular location is the secreted. In terms of biological role, cytokine with a wide variety of biological functions in immunity, tissue regeneration, and metabolism. Binds to IL6R, then the complex associates to the signaling subunit IL6ST/gp130 to trigger the intracellular IL6-signaling pathway. The interaction with the membrane-bound IL6R and IL6ST stimulates 'classic signaling', whereas the binding of IL6 and soluble IL6R to IL6ST stimulates 'trans-signaling'. Alternatively, 'cluster signaling' occurs when membrane-bound IL6:IL6R complexes on transmitter cells activate IL6ST receptors on neighboring receiver cells. This Oncorhynchus mykiss (Rainbow trout) protein is Interleukin-6 (il6).